Reading from the N-terminus, the 802-residue chain is MLNILVLGNGAREHVLVTKLAQSPTVGKIYVAPGNGGTATMDPSRVINWDITPDVANFARLQSMAVEHKINLVVPGPELPLVNGITSVFHSVGIPVFGPSVKAAQLEASKAFSKRFMSKHNIPTASYDVFTNPEEAISFLQAHTDKAFVIKADGIAAGKGVIIPSSIDESVQAIKDIMVTKQFGEEAGKQVVIEQFLEGDEISLLTIVDGYSHFNLPVAQDHKRIFDGDKGLNTGGMGAYAPAPVATPSLLKTIDSQIVKPTIDGMRRDGMPFVGVLFTGMILVKDSKTNQLVPEVLEYNVRFGDPETQAVLSLLDDQTDLAQVFLAAAEHRLDSVNIGIDDTRSAVTVVVAAGGYPESYAKGDKITLDTDKLPPHTQIFQAGTKYDSATDSLLTNGGRVLSVTSTAQDLRTAVDTVYEAVKCVHFQNSYYRKDIAYRAFQNSESSKVAITYADSGVSVDNGNNLVQTIKEMVRSTRRPGADSDIGGFGGLFDLAQAGFRQNEDTLLVGATDGVGTKLIIAQETGIHNTVGIDLVAMNVNDLVVQGAEPLFFLDYFATGALDIQVASDFVSGVANGCIQSGCALVGGETSEMPGMYPPGHYDTNGTAVGAVLRQDILPKINEMAAGDVLLGLASSGVHSNGFSLVRKIIQHVALPWDAPCPWDESKTLGEGILEPTKIYVKQLLPSIRQRLLLGLAHITGGGLVENIPRAIPDHLQARVDMSTWEVPRVFKWFGQAGNVPHDDILRTFNMGVGMVLIVKRENVKAVCDSLTEEGEIIWELGSLQERPKDAPGCVIENGTKLY.

Residues 1–450 (MLNILVLGNG…QNSESSKVAI (450 aa)) form a GARS region. The ATP-grasp domain occupies 114–330 (KRFMSKHNIP…LAQVFLAAAE (217 aa)). 141 to 203 (QAHTDKAFVI…EQFLEGDEIS (63 aa)) contacts ATP. 2 residues coordinate Mg(2+): Glu298 and Asn300. The tract at residues 451–802 (TYADSGVSVD…CVIENGTKLY (352 aa)) is AIRS. Phosphoserine is present on residues Ser455 and Ser458.

This sequence in the N-terminal section; belongs to the GARS family. It in the C-terminal section; belongs to the AIR synthase family. The cofactor is Mg(2+). Mn(2+) serves as cofactor.

It is found in the cytoplasm. The catalysed reaction is 5-phospho-beta-D-ribosylamine + glycine + ATP = N(1)-(5-phospho-beta-D-ribosyl)glycinamide + ADP + phosphate + H(+). It catalyses the reaction 2-formamido-N(1)-(5-O-phospho-beta-D-ribosyl)acetamidine + ATP = 5-amino-1-(5-phospho-beta-D-ribosyl)imidazole + ADP + phosphate + H(+). The protein operates within purine metabolism; IMP biosynthesis via de novo pathway; 5-amino-1-(5-phospho-D-ribosyl)imidazole from N(2)-formyl-N(1)-(5-phospho-D-ribosyl)glycinamide: step 2/2. It participates in purine metabolism; IMP biosynthesis via de novo pathway; N(1)-(5-phospho-D-ribosyl)glycinamide from 5-phospho-alpha-D-ribose 1-diphosphate: step 2/2. In terms of biological role, catalyzes the second and fifth step in the 'de novo' purine biosynthesis pathway; contains phosphoribosylamine--glycine ligase (GARS) and phosphoribosylformylglycinamidine cyclo-ligase (AIRS) activities. The polypeptide is Bifunctional purine biosynthetic protein ADE5,7 (Saccharomyces cerevisiae (strain ATCC 204508 / S288c) (Baker's yeast)).